The following is a 956-amino-acid chain: Endogenous retrovirus group K member 8 Pol protein (956 aa).

The region spanning 57–245 (LEKGHIEPSF…TPFHYLGMQI (189 aa)) is the Reverse transcriptase domain. The short motif at 161-164 (LPQG) is the LPQG element. The YXDD motif lies at 195–198 (YIDD). In terms of domain architecture, RNase H type-1 spans 460-590 (LENALTVFTD…ADLLVSSALI (131 aa)). Mg(2+)-binding residues include aspartate 469, glutamate 497, aspartate 517, and aspartate 582. The segment at 587–628 (SALIKAQELHALTHVNAAGLKNKFDVTWKQAKDIVQHCTQCQ) adopts an Integrase-type zinc-finger fold. Residues histidine 596, histidine 600, cysteine 624, and cysteine 627 each contribute to the Zn(2+) site. Positions 642–803 (RGLCPNALWQ…TSAEQHLTGK (162 aa)) constitute an Integrase catalytic domain. Residues 811–859 (KLIWWKDNKNKTWEIGKVITWGRGFACVSPGENQLPVWIPTRHLKFYNE) constitute a DNA-binding region (integrase-type). A disordered region spans residues 864–890 (AKKSTSAETETPQSSTVDSQDEQNGDV). A compositionally biased stretch (polar residues) spans 869–881 (SAETETPQSSTVD).

The protein belongs to the beta type-B retroviral polymerase family. HERV class-II K(HML-2) pol subfamily.

It carries out the reaction DNA(n) + a 2'-deoxyribonucleoside 5'-triphosphate = DNA(n+1) + diphosphate. The catalysed reaction is Endonucleolytic cleavage to 5'-phosphomonoester.. Functionally, early post-infection, the reverse transcriptase converts the viral RNA genome into double-stranded viral DNA. The RNase H domain of the reverse transcriptase performs two functions. It degrades the RNA template and specifically removes the RNA primer from the RNA/DNA hybrid. Following nuclear import, the integrase catalyzes the insertion of the linear, double-stranded viral DNA into the host cell chromosome. Endogenous Pol proteins may have kept, lost or modified their original function during evolution. The chain is Endogenous retrovirus group K member 8 Pol protein (ERVK-8) from Homo sapiens (Human).